Consider the following 365-residue polypeptide: Chorismate synthase (365 aa).

Arg46 serves as a coordination point for NADP(+). Residues 123-125 (RSS), 241-242 (NG), Gly281, 296-300 (KPTPS), and Arg322 contribute to the FMN site.

Belongs to the chorismate synthase family. Homotetramer. The cofactor is FMNH2.

The catalysed reaction is 5-O-(1-carboxyvinyl)-3-phosphoshikimate = chorismate + phosphate. Its pathway is metabolic intermediate biosynthesis; chorismate biosynthesis; chorismate from D-erythrose 4-phosphate and phosphoenolpyruvate: step 7/7. In terms of biological role, catalyzes the anti-1,4-elimination of the C-3 phosphate and the C-6 proR hydrogen from 5-enolpyruvylshikimate-3-phosphate (EPSP) to yield chorismate, which is the branch point compound that serves as the starting substrate for the three terminal pathways of aromatic amino acid biosynthesis. This reaction introduces a second double bond into the aromatic ring system. In Helicobacter pylori (strain HPAG1), this protein is Chorismate synthase.